The sequence spans 88 residues: uncharacterized protein (88 aa).

A helical membrane pass occupies residues 34–54 (IIIAVILIFFLTIVGLFYLII).

The protein resides in the membrane. This is an uncharacterized protein from Ureaplasma parvum serovar 3 (strain ATCC 700970).